Reading from the N-terminus, the 721-residue chain is Dipeptidyl-peptidase 5 (721 aa).

Residues 1-18 (MGAFRWLSIAAAASTALA) form the signal peptide. N-linked (GlcNAc...) asparagine glycans are attached at residues Asn-75, Asn-94, Asn-151, and Asn-254. The tract at residues 271-297 (ARPINGPDSPGTPKGIKGDSSSPVFSP) is disordered. 2 N-linked (GlcNAc...) asparagine glycosylation sites follow: Asn-380 and Asn-450. Ser-560 (charge relay system) is an active-site residue. N-linked (GlcNAc...) asparagine glycosylation occurs at Asn-607. Active-site charge relay system residues include Asp-643 and His-675.

It belongs to the peptidase S9C family. In terms of processing, N-glycosylated. In terms of tissue distribution, expressed in mycelia and conidia.

It is found in the secreted. Its function is as follows. May be involved in metabolism of dipeptides or may affect host defense mechanisms. Has a substrate specificity limited to the hydrolysis of X-Ala, His-Ser, and Ser-Tyr dipeptides at a neutral pH optimum. In Aspergillus fumigatus (strain ATCC MYA-4609 / CBS 101355 / FGSC A1100 / Af293) (Neosartorya fumigata), this protein is Dipeptidyl-peptidase 5.